Reading from the N-terminus, the 299-residue chain is Methionine aminopeptidase (299 aa).

H64 is a binding site for substrate. A divalent metal cation-binding residues include D84, D95, and H158. Residue H166 participates in substrate binding. Residues E191 and E284 each coordinate a divalent metal cation.

The protein belongs to the peptidase M24A family. Methionine aminopeptidase archaeal type 2 subfamily. Monomer. The cofactor is Co(2+). Requires Zn(2+) as cofactor. Mn(2+) serves as cofactor. It depends on Fe(2+) as a cofactor.

It catalyses the reaction Release of N-terminal amino acids, preferentially methionine, from peptides and arylamides.. Its function is as follows. Removes the N-terminal methionine from nascent proteins. The N-terminal methionine is often cleaved when the second residue in the primary sequence is small and uncharged (Met-Ala-, Cys, Gly, Pro, Ser, Thr, or Val). The polypeptide is Methionine aminopeptidase (Methanothermobacter thermautotrophicus (strain ATCC 29096 / DSM 1053 / JCM 10044 / NBRC 100330 / Delta H) (Methanobacterium thermoautotrophicum)).